The sequence spans 61 residues: Furostanol glycoside 26-O-beta-glucosidase (61 aa).

The active-site Proton donor/acceptor is Asp33. A D-glucose-binding site is contributed by Asp33.

The protein belongs to the glycosyl hydrolase 3 family. In terms of assembly, monomer. Glycosylated. In terms of tissue distribution, expressed in petioles and leaves, but not in fruits.

The catalysed reaction is protodioscin + H2O = 26-deglucoprotodioscin + D-glucose. Inhibited by Hg(2+) and D-glucono-1,5-lactone. Beta-glucosidase highly specific for the cleavage of C-26-bound glucose moiety of furostanol glycosides torvosides A and H. Hydrolyzes only p-nitrophenyl-beta-glucoside, but not p-nitrophenyl-beta-D-fucoside, p-nitrophenyl-beta-L-fucoside, p-nitrophenyl-beta-D-xyloside, p-nitrophenyl-beta-D-galactoside, p-nitrophenyl-beta-D-NAc-glucosamine, p-nitrophenyl-beta-D-mannoside or any of the p-nitrophenyl-alpha-glycosides tested. The protein is Furostanol glycoside 26-O-beta-glucosidase of Solanum torvum (Turkey berry).